A 315-amino-acid polypeptide reads, in one-letter code: Melanocyte-stimulating hormone receptor (315 aa).

Residues 1–35 (MSTQEPQKSLLGSLNSNATSHLGLATNQSEPWCLY) are Extracellular-facing. 2 N-linked (GlcNAc...) asparagine glycosylation sites follow: N17 and N27. A helical transmembrane segment spans residues 36-61 (VSIPDGLFLSLGLVSLVENVLVVIAI). Topologically, residues 62–70 (TKNRNLHSP) are cytoplasmic. A helical transmembrane segment spans residues 71–91 (MYYFICCLALSDLMVSVSIVL). Over 92–116 (ETTIILLLEAGILVARVALVQQLDN) the chain is Extracellular. A helical transmembrane segment spans residues 117–138 (LIDVLICGSMVSSLCFLGIIAI). The Cytoplasmic segment spans residues 139–161 (DRYISIFYALRYHSIVTLPRARR). A helical membrane pass occupies residues 162 to 181 (AVVGIWMVSIVSSTLFITYY). At 182-189 (KHTAVLLC) the chain is on the extracellular side. The helical transmembrane segment at 190–209 (LVTFFLAMLALMAILYAHMF) threads the bilayer. Over 210-238 (TRACQHAQGIAQLHKRRRSIRQGFCLKGA) the chain is Cytoplasmic. The chain crosses the membrane as a helical span at residues 239–264 (ATLTILLGIFFLCWGPFFLHLLLIVL). The Extracellular segment spans residues 265-277 (CPQHPTCSCIFKN). A helical membrane pass occupies residues 278–298 (FNLFLLLIVLSSTVDPLIYAF). Residues 299-315 (RSQELRMTLKEVLLCSW) are Cytoplasmic-facing. The S-palmitoyl cysteine moiety is linked to residue C313.

This sequence belongs to the G-protein coupled receptor 1 family. Interacts with MGRN1, but does not undergo MGRN1-mediated ubiquitination; this interaction competes with GNAS-binding and thus inhibits agonist-induced cAMP production. Interacts with OPN3; the interaction results in a decrease in MC1R-mediated cAMP signaling and ultimately a decrease in melanin production in melanocytes.

Its subcellular location is the cell membrane. Its function is as follows. Receptor for MSH (alpha, beta and gamma) and ACTH. The activity of this receptor is mediated by G proteins which activate adenylate cyclase. Mediates melanogenesis, the production of eumelanin (black/brown) and phaeomelanin (red/yellow), via regulation of cAMP signaling in melanocytes. The chain is Melanocyte-stimulating hormone receptor (Mc1r) from Mus musculus (Mouse).